The primary structure comprises 284 residues: MTYPGILLKKQQLMARKELGQNFLSDPNAARMIVTKAGISDQDRVLEIGPGLGALTIPAAKLARDLVAVEKDTRLAGILMEELKRESIENVELINNDILHQDLNTLFRGEKIIVIGNLPYNISSQVLFMLVENRHLIKRAVLMFQKELTERISASPGGRDYGRLSVVMQYCSTVKKIADLPPHLFFPKPAVDSRVIEVNFFETTPYSGERERFLFKVIKAAFSKRRKTLRNSLAGGELDIDTKVSAKILETAEIDPVRRAETLSVEEYSRLSDALWSMHGSEEV.

S-adenosyl-L-methionine is bound by residues Asn-22, Leu-24, Gly-49, Glu-70, Asp-97, and Asn-117.

It belongs to the class I-like SAM-binding methyltransferase superfamily. rRNA adenine N(6)-methyltransferase family. RsmA subfamily.

The protein resides in the cytoplasm. The enzyme catalyses adenosine(1518)/adenosine(1519) in 16S rRNA + 4 S-adenosyl-L-methionine = N(6)-dimethyladenosine(1518)/N(6)-dimethyladenosine(1519) in 16S rRNA + 4 S-adenosyl-L-homocysteine + 4 H(+). Specifically dimethylates two adjacent adenosines (A1518 and A1519) in the loop of a conserved hairpin near the 3'-end of 16S rRNA in the 30S particle. May play a critical role in biogenesis of 30S subunits. The chain is Ribosomal RNA small subunit methyltransferase A from Desulforapulum autotrophicum (strain ATCC 43914 / DSM 3382 / VKM B-1955 / HRM2) (Desulfobacterium autotrophicum).